Consider the following 466-residue polypeptide: Asparagine--tRNA ligase (466 aa).

This sequence belongs to the class-II aminoacyl-tRNA synthetase family. In terms of assembly, homodimer.

It is found in the cytoplasm. The enzyme catalyses tRNA(Asn) + L-asparagine + ATP = L-asparaginyl-tRNA(Asn) + AMP + diphosphate + H(+). This is Asparagine--tRNA ligase from Vibrio vulnificus (strain YJ016).